The primary structure comprises 1026 residues: mRNA transport homolog 4 (1026 aa).

Residues 134-290 (ILCIDNNQSV…WVASIKQQPV (157 aa)) enclose the Helicase ATP-binding domain. 147-154 (AHTSAGKT) contacts ATP. A DEIH box motif is present at residues 238-241 (DEIH). The 205-residue stretch at 360 to 564 (NVLKIIRSVA…NMVLNLMRVE (205 aa)) folds into the Helicase C-terminal domain.

It belongs to the helicase family. SKI2 subfamily.

The protein resides in the nucleus. The polypeptide is mRNA transport homolog 4 (mtr-4) (Caenorhabditis elegans).